The sequence spans 230 residues: Large ribosomal subunit protein uL1 (230 aa).

This sequence belongs to the universal ribosomal protein uL1 family. As to quaternary structure, part of the 50S ribosomal subunit.

In terms of biological role, binds directly to 23S rRNA. The L1 stalk is quite mobile in the ribosome, and is involved in E site tRNA release. Protein L1 is also a translational repressor protein, it controls the translation of the L11 operon by binding to its mRNA. The protein is Large ribosomal subunit protein uL1 of Bacillus cereus (strain B4264).